Here is a 427-residue protein sequence, read N- to C-terminus: Adenylosuccinate synthetase (427 aa).

GTP-binding positions include 12-18 (GDEGKGK) and 40-42 (GHT). Residue Asp13 is the Proton acceptor of the active site. 2 residues coordinate Mg(2+): Asp13 and Gly40. Residues 13-16 (DEGK), 38-41 (NAGH), Thr131, Arg145, Gln226, Thr241, and Arg305 each bind IMP. His41 acts as the Proton donor in catalysis. 301–307 (ATTGRKR) lines the substrate pocket. Residues Arg307, 333 to 335 (KLD), and 415 to 417 (SVG) each bind GTP.

Belongs to the adenylosuccinate synthetase family. As to quaternary structure, homodimer. The cofactor is Mg(2+).

It is found in the cytoplasm. The catalysed reaction is IMP + L-aspartate + GTP = N(6)-(1,2-dicarboxyethyl)-AMP + GDP + phosphate + 2 H(+). It functions in the pathway purine metabolism; AMP biosynthesis via de novo pathway; AMP from IMP: step 1/2. Plays an important role in the de novo pathway of purine nucleotide biosynthesis. Catalyzes the first committed step in the biosynthesis of AMP from IMP. The sequence is that of Adenylosuccinate synthetase from Oleidesulfovibrio alaskensis (strain ATCC BAA-1058 / DSM 17464 / G20) (Desulfovibrio alaskensis).